A 1025-amino-acid polypeptide reads, in one-letter code: Multidrug resistance protein MdtC (1025 aa).

A run of 12 helical transmembrane segments spans residues 3–23 (FFAL…AITL), 333–353 (EVEQ…FLFL), 360–380 (IIPA…MYLC), 387–407 (LSLM…IVVL), 431–451 (VGFT…PLLL), 463–483 (FAVT…TLTP), 528–548 (LVGV…ISIP), 853–873 (VILI…LYES), 875–895 (VHPL…LLAL), 897–917 (LFNA…IGIV), 953–973 (PIMM…LSGG), and 984–1004 (ITIV…TPVV).

This sequence belongs to the resistance-nodulation-cell division (RND) (TC 2.A.6) family. MdtC subfamily. As to quaternary structure, part of a tripartite efflux system composed of MdtA, MdtB and MdtC. MdtC forms a heteromultimer with MdtB.

Its subcellular location is the cell inner membrane. Functionally, the MdtABC tripartite complex confers resistance against novobiocin and deoxycholate. This chain is Multidrug resistance protein MdtC, found in Escherichia coli O17:K52:H18 (strain UMN026 / ExPEC).